The primary structure comprises 222 residues: Adapter protein MecA (222 aa).

The protein belongs to the MecA family. In terms of assembly, homodimer.

Its function is as follows. Enables the recognition and targeting of unfolded and aggregated proteins to the ClpC protease or to other proteins involved in proteolysis. The sequence is that of Adapter protein MecA from Lysinibacillus sphaericus (strain C3-41).